Reading from the N-terminus, the 78-residue chain is Large ribosomal subunit protein bL28 (78 aa).

The protein belongs to the bacterial ribosomal protein bL28 family.

The chain is Large ribosomal subunit protein bL28 from Synechococcus sp. (strain CC9311).